The following is a 191-amino-acid chain: ATP-dependent Clp protease proteolytic subunit 1 (191 aa).

Ser-91 (nucleophile) is an active-site residue. His-116 is an active-site residue.

Belongs to the peptidase S14 family. In terms of assembly, fourteen ClpP subunits assemble into 2 heptameric rings which stack back to back to give a disk-like structure with a central cavity, resembling the structure of eukaryotic proteasomes.

Its subcellular location is the cytoplasm. It carries out the reaction Hydrolysis of proteins to small peptides in the presence of ATP and magnesium. alpha-casein is the usual test substrate. In the absence of ATP, only oligopeptides shorter than five residues are hydrolyzed (such as succinyl-Leu-Tyr-|-NHMec, and Leu-Tyr-Leu-|-Tyr-Trp, in which cleavage of the -Tyr-|-Leu- and -Tyr-|-Trp bonds also occurs).. Cleaves peptides in various proteins in a process that requires ATP hydrolysis. Has a chymotrypsin-like activity. Plays a major role in the degradation of misfolded proteins. The protein is ATP-dependent Clp protease proteolytic subunit 1 of Chlamydia caviae (strain ATCC VR-813 / DSM 19441 / 03DC25 / GPIC) (Chlamydophila caviae).